Reading from the N-terminus, the 360-residue chain is S-adenosylmethionine decarboxylase proenzyme (360 aa).

Residues Glu-13 and Glu-16 contribute to the active site. Ser-73 (schiff-base intermediate with substrate; via pyruvic acid) is an active-site residue. A Pyruvic acid (Ser); by autocatalysis modification is found at Ser-73. Residue Cys-87 is the Proton donor; for catalytic activity of the active site. Active-site proton acceptor; for processing activity residues include Ser-236 and His-249.

The protein belongs to the eukaryotic AdoMetDC family. The cofactor is pyruvate. In terms of processing, is synthesized initially as an inactive proenzyme. Formation of the active enzyme involves a self-maturation process in which the active site pyruvoyl group is generated from an internal serine residue via an autocatalytic post-translational modification. Two non-identical subunits are generated from the proenzyme in this reaction, and the pyruvate is formed at the N-terminus of the alpha chain, which is derived from the carboxyl end of the proenzyme. The post-translation cleavage follows an unusual pathway, termed non-hydrolytic serinolysis, in which the side chain hydroxyl group of the serine supplies its oxygen atom to form the C-terminus of the beta chain, while the remainder of the serine residue undergoes an oxidative deamination to produce ammonia and the pyruvoyl group blocking the N-terminus of the alpha chain. As to expression, stolon, also expressed in leaves, stems and roots.

The catalysed reaction is S-adenosyl-L-methionine + H(+) = S-adenosyl 3-(methylsulfanyl)propylamine + CO2. It functions in the pathway amine and polyamine biosynthesis; S-adenosylmethioninamine biosynthesis; S-adenosylmethioninamine from S-adenosyl-L-methionine: step 1/1. The sequence is that of S-adenosylmethionine decarboxylase proenzyme (SAMDC) from Solanum tuberosum (Potato).